Reading from the N-terminus, the 221-residue chain is DNA replication complex GINS protein SLD5 (221 aa).

Belongs to the GINS4/SLD5 family. Component of the GINS complex which is a heterotetramer of gins1/psf1, gins2/psf2, gins3/psf3 and gins4/sld5. Component of the CMG helicase complex, composed of the mcm2-7 complex, the GINS complex and cdc45.

It localises to the nucleus. It is found in the chromosome. The protein localises to the cytoplasm. Its function is as follows. Required for initiation of chromosomal DNA replication. Core component of CDC45-MCM-GINS (CMG) helicase, the molecular machine that unwinds template DNA during replication, and around which the replisome is built. The protein is DNA replication complex GINS protein SLD5 of Xenopus laevis (African clawed frog).